Here is a 313-residue protein sequence, read N- to C-terminus: 3'-5' exoribonuclease YhaM (313 aa).

Positions 163-279 (HVVSMLRLAK…LHQIDLMDAS (117 aa)) constitute an HD domain.

The protein belongs to the YhaM family.

Its function is as follows. Shows a 3'-5' exoribonuclease activity. The protein is 3'-5' exoribonuclease YhaM of Listeria monocytogenes serotype 4b (strain CLIP80459).